The sequence spans 518 residues: Organic cation/carnitine transporter 3 (518 aa).

The tract at residues 1 to 23 (MADSTRPLLSDFNSSESNLPPPR) is disordered. Over 1–32 (MADSTRPLLSDFNSSESNLPPPRSLEETIERC) the chain is Cytoplasmic. Residues 33-53 (IGDFGWAQFLQAALVSFAWFF) form a helical membrane-spanning segment. The Extracellular segment spans residues 54–122 (DAQQTFITVF…LQCAGSFLKG (69 aa)). N-linked (GlcNAc...) asparagine glycans are attached at residues Asn-83 and Asn-94. Residues 123-143 (FPASSFFLGCLIGGLALSTLA) traverse the membrane as a helical segment. The Cytoplasmic segment spans residues 144-157 (DSSLGRKNMLLLSC). A helical membrane pass occupies residues 158-178 (LIMSLSSMLTAFSTSIWVYAF). Topologically, residues 179-180 (LR) are extracellular. The chain crosses the membrane as a helical span at residues 181-197 (FLNGCGRATIGTCALVL). Position 198 to 205 (198 to 205 (STELVGKK)) interacts with ATP. Residues 198 to 210 (STELVGKKWRGQV) lie on the Cytoplasmic side of the membrane. The chain crosses the membrane as a helical span at residues 211-231 (GAMGFFCFTLGFLSLPMLGYI). Residues 232-239 (NEGNSWRN) are Extracellular-facing. A helical transmembrane segment spans residues 240–259 (LYVWTSIPTLIYCCLVRSFV). The Cytoplasmic segment spans residues 260–325 (RESPRWLIVK…LVRKSWSFRR (66 aa)). The helical transmembrane segment at 326 to 346 (LLAAMVVGFGIGMVYYGMPLA) threads the bilayer. Residues 347 to 355 (LTNLNFNLY) are Extracellular-facing. Residues 356-376 (LGVVFNALSEFPAFLITFFFI) form a helical membrane-spanning segment. Topologically, residues 377 to 383 (DKINRRD) are cytoplasmic. A helical membrane pass occupies residues 384–404 (ALIGFTALSGISSALIAVLGQ). Residues 405–410 (QLGSLQ) are Extracellular-facing. A helical transmembrane segment spans residues 411–431 (IVLELVSFFSACTAFNMTLIY). The Cytoplasmic portion of the chain corresponds to 432-443 (TIEMFPTCVRNS). Residues 444–464 (AISMVRQALVFGGVFSPVMVA) form a helical membrane-spanning segment. Residues 465–470 (AGRENQ) are Extracellular-facing. The chain crosses the membrane as a helical span at residues 471–491 (FWSYGLFGLIIGLCGLFVFGL). Topologically, residues 492–518 (PETRGSVLCDTMDEEEYKTLAKRQFIG) are cytoplasmic.

Belongs to the major facilitator (TC 2.A.1) superfamily. Organic cation transporter (TC 2.A.1.19) family. Mostly expressed in siliques, mainly in young seeds. Present in stems (cortical cells and parenchyma cells), at the basis of secondary inflorescences, and at the base of trichomes.

Its subcellular location is the vacuole membrane. In terms of biological role, high affinity carnitine transporter involved in the active cellular uptake of carnitine. Also transports organic cations. The protein is Organic cation/carnitine transporter 3 (OCT3) of Arabidopsis thaliana (Mouse-ear cress).